We begin with the raw amino-acid sequence, 311 residues long: Dehydrogenase/reductase SDR family member 7C (311 aa).

The signal sequence occupies residues M1–G18. S47, L49, Y191, K195, and S226 together coordinate NAD(+). Catalysis depends on Y191, which acts as the Proton acceptor.

It belongs to the short-chain dehydrogenases/reductases (SDR) family.

The protein resides in the sarcoplasmic reticulum membrane. It catalyses the reaction all-trans-retinol + NAD(+) = all-trans-retinal + NADH + H(+). Its function is as follows. NADH-dependent oxidoreductase which catalyzes the oxidation of all-trans-retinol to all-trans-retinal. Plays a role in the regulation of cardiac and skeletal muscle metabolic functions. Maintains Ca(2+) intracellular homeostasis by repressing Ca(2+) release from the sarcoplasmic reticulum (SR) in myotubes, possibly through local alternations in NAD/NADH or retinol/retinal. Also plays a role in Ca(2+) homeostasis by controlling Ca(2+) overload in the cytosol and the SR in myotubes. Involved in glucose uptake into skeletal muscles and muscle performance by activating PI3K and mTORC2-mediated AKT1 phosphorylation signaling pathways, possibly through the action of its downstream catalytic product all-trans-retinoic acid. The polypeptide is Dehydrogenase/reductase SDR family member 7C (DHRS7C) (Bos taurus (Bovine)).